We begin with the raw amino-acid sequence, 211 residues long: Protein crossbronx-like (211 aa).

Positions 17 to 177 (NQGYQILAEY…VRNSILWSCK (161 aa)) constitute a UBC core domain.

This sequence belongs to the ubiquitin-conjugating enzyme family. FTS subfamily.

The chain is Protein crossbronx-like from Drosophila grimshawi (Hawaiian fruit fly).